The sequence spans 385 residues: UDP-4-amino-4-deoxy-L-arabinose--oxoglutarate aminotransferase (385 aa).

The Proton acceptor role is filled by K188. The residue at position 188 (K188) is an N6-(pyridoxal phosphate)lysine.

Belongs to the DegT/DnrJ/EryC1 family. ArnB subfamily. Homodimer. Pyridoxal 5'-phosphate serves as cofactor.

The enzyme catalyses UDP-4-amino-4-deoxy-beta-L-arabinose + 2-oxoglutarate = UDP-beta-L-threo-pentopyranos-4-ulose + L-glutamate. Its pathway is nucleotide-sugar biosynthesis; UDP-4-deoxy-4-formamido-beta-L-arabinose biosynthesis; UDP-4-deoxy-4-formamido-beta-L-arabinose from UDP-alpha-D-glucuronate: step 2/3. It functions in the pathway bacterial outer membrane biogenesis; lipopolysaccharide biosynthesis. Its activity is regulated as follows. Inhibited by L-cycloserine. In terms of biological role, catalyzes the conversion of UDP-4-keto-arabinose (UDP-Ara4O) to UDP-4-amino-4-deoxy-L-arabinose (UDP-L-Ara4N). The modified arabinose is attached to lipid A and is required for resistance to polymyxin and cationic antimicrobial peptides. The chain is UDP-4-amino-4-deoxy-L-arabinose--oxoglutarate aminotransferase (arnB) from Salmonella typhimurium (strain LT2 / SGSC1412 / ATCC 700720).